Reading from the N-terminus, the 172-residue chain is Signal peptidase complex catalytic subunit SEC11 (172 aa).

Residues 1-14 (MLSSLQNPRQAAAQ) lie on the Cytoplasmic side of the membrane. The chain crosses the membrane as a helical; Signal-anchor for type II membrane protein span at residues 15 to 35 (LMNFAMILSTAFMMWKGLSVA). Residues 36-172 (TDSPSPIVVV…MGLLVVIQRE (137 aa)) are Lumenal-facing. Residues serine 49, histidine 90, and aspartate 115 each act as charge relay system in the active site. Positions 158–169 (VMLGIMGLLVVI) are C-terminal short (CTS) helix.

It belongs to the peptidase S26B family. Component of the signal peptidase complex (SPC) composed of a catalytic subunit SEC11 and three accessory subunits SPC1, SPC2 and SPC3. The complex induces a local thinning of the ER membrane which is used to measure the length of the signal peptide (SP) h-region of protein substrates. This ensures the selectivity of the complex towards h-regions shorter than 18-20 amino acids. SPC associates with the translocon complex.

Its subcellular location is the endoplasmic reticulum membrane. The catalysed reaction is Cleavage of hydrophobic, N-terminal signal or leader sequences from secreted and periplasmic proteins.. Its function is as follows. Catalytic component of the signal peptidase complex (SPC) which catalyzes the cleavage of N-terminal signal sequences from nascent proteins as they are translocated into the lumen of the endoplasmic reticulum. Specifically cleaves N-terminal signal peptides that contain a hydrophobic alpha-helix (h-region) shorter than 18-20 amino acids. The protein is Signal peptidase complex catalytic subunit SEC11 (SEC11) of Metarhizium robertsii (strain ARSEF 23 / ATCC MYA-3075) (Metarhizium anisopliae (strain ARSEF 23)).